We begin with the raw amino-acid sequence, 542 residues long: Chaperonin GroEL (542 aa).

ATP-binding positions include 29 to 32 (TLGP), K50, 86 to 90 (DGTTT), G414, and D494.

It belongs to the chaperonin (HSP60) family. As to quaternary structure, forms a cylinder of 14 subunits composed of two heptameric rings stacked back-to-back. Interacts with the co-chaperonin GroES.

Its subcellular location is the cytoplasm. The catalysed reaction is ATP + H2O + a folded polypeptide = ADP + phosphate + an unfolded polypeptide.. In terms of biological role, together with its co-chaperonin GroES, plays an essential role in assisting protein folding. The GroEL-GroES system forms a nano-cage that allows encapsulation of the non-native substrate proteins and provides a physical environment optimized to promote and accelerate protein folding. The protein is Chaperonin GroEL of Cytophaga hutchinsonii (strain ATCC 33406 / DSM 1761 / CIP 103989 / NBRC 15051 / NCIMB 9469 / D465).